A 166-amino-acid polypeptide reads, in one-letter code: Orotate phosphoribosyltransferase (166 aa).

Residues arginine 83, lysine 84, histidine 89, and 109 to 117 contribute to the 5-phospho-alpha-D-ribose 1-diphosphate site; that span reads DDVATTGGS. Residues threonine 113 and arginine 141 each contribute to the orotate site.

This sequence belongs to the purine/pyrimidine phosphoribosyltransferase family. PyrE subfamily. In terms of assembly, homodimer. It depends on Mg(2+) as a cofactor.

The catalysed reaction is orotidine 5'-phosphate + diphosphate = orotate + 5-phospho-alpha-D-ribose 1-diphosphate. It participates in pyrimidine metabolism; UMP biosynthesis via de novo pathway; UMP from orotate: step 1/2. Catalyzes the transfer of a ribosyl phosphate group from 5-phosphoribose 1-diphosphate to orotate, leading to the formation of orotidine monophosphate (OMP). This chain is Orotate phosphoribosyltransferase, found in Picrophilus torridus (strain ATCC 700027 / DSM 9790 / JCM 10055 / NBRC 100828 / KAW 2/3).